An 872-amino-acid polypeptide reads, in one-letter code: Alanine--tRNA ligase (872 aa).

Residues His-563, His-567, Cys-665, and His-669 each contribute to the Zn(2+) site.

The protein belongs to the class-II aminoacyl-tRNA synthetase family. Zn(2+) serves as cofactor.

The protein resides in the cytoplasm. It carries out the reaction tRNA(Ala) + L-alanine + ATP = L-alanyl-tRNA(Ala) + AMP + diphosphate. In terms of biological role, catalyzes the attachment of alanine to tRNA(Ala) in a two-step reaction: alanine is first activated by ATP to form Ala-AMP and then transferred to the acceptor end of tRNA(Ala). Also edits incorrectly charged Ser-tRNA(Ala) and Gly-tRNA(Ala) via its editing domain. This chain is Alanine--tRNA ligase, found in Bacteroides thetaiotaomicron (strain ATCC 29148 / DSM 2079 / JCM 5827 / CCUG 10774 / NCTC 10582 / VPI-5482 / E50).